Here is a 371-residue protein sequence, read N- to C-terminus: MSLEPFIDSKPFTFGVELEMQIVNTHDYDLTKAGSDLLRLIKDEKIPGNITPEITESMIELSTGICTTHEQAVADLRKIRDTLVSAADHLNVGLCGGGTHAFQQWSERQIVDTPRFQYLSELYGYLAKQFTVFGQHVHIGCPDPNSALYLLHSMSRFIPHFIALSASSPFVQGVDTGFHSARLNSVFAFPLSGRAPFVLTWDSFEEYFSKMVHTGVVNSMKDFYWDIRPKPGFGTIEVRVMDTPLSVDRAAAIACYIQTLARHLLLDKPISPKEDDYLVYTFNRFEACRFGLAGTCINPQTGERKTISEDILETLDRIAPHAEALGSGNALAEIGAIARSQVNDATWLRGVVEREKSLHEAVRQQCLEWRA.

Belongs to the glutamate--cysteine ligase type 2 family. YbdK subfamily.

The catalysed reaction is L-cysteine + L-glutamate + ATP = gamma-L-glutamyl-L-cysteine + ADP + phosphate + H(+). ATP-dependent carboxylate-amine ligase which exhibits weak glutamate--cysteine ligase activity. The polypeptide is Putative glutamate--cysteine ligase 2 (Paraburkholderia xenovorans (strain LB400)).